The following is a 98-amino-acid chain: Small ribosomal subunit protein bS6 (98 aa).

The protein belongs to the bacterial ribosomal protein bS6 family.

Functionally, binds together with bS18 to 16S ribosomal RNA. This is Small ribosomal subunit protein bS6 from Lactobacillus helveticus (strain DPC 4571).